Consider the following 577-residue polypeptide: Probable L-gulonolactone oxidase 4 (577 aa).

A signal peptide spans 1–17 (MSFWLSLIFCFFTFASS). One can recognise an FAD-binding PCMH-type domain in the interval 46 to 228 (SICKAAKVEY…SQVTFELQPM (183 aa)).

The protein belongs to the oxygen-dependent FAD-linked oxidoreductase family. FAD is required as a cofactor.

The catalysed reaction is L-gulono-1,4-lactone + O2 = L-ascorbate + H2O2 + H(+). The protein operates within cofactor biosynthesis; L-ascorbate biosynthesis. Its function is as follows. May be involved in the biosynthesis of ascorbic acid. The sequence is that of Probable L-gulonolactone oxidase 4 from Arabidopsis thaliana (Mouse-ear cress).